Consider the following 56-residue polypeptide: Large ribosomal subunit protein bL32 (56 aa).

A disordered region spans residues 1–37 (MAVQQNKKSRSRRDMRRSHDALTTAAVSVDKTTGETH). Residues 7–16 (KKSRSRRDMR) are compositionally biased toward basic residues.

Belongs to the bacterial ribosomal protein bL32 family.

The sequence is that of Large ribosomal subunit protein bL32 from Haemophilus ducreyi (strain 35000HP / ATCC 700724).